The following is a 452-amino-acid chain: Zinc finger protein 277 (452 aa).

The segment at 200–224 adopts a C2H2-type 1 zinc-finger fold; the sequence is LMCLYCEKIFRDRPTLKEHMRKKGH. Residues 248 to 271 are disordered; it reads APTPRKQHLQKRRRETASVSTVAD. Over residues 252–261 the composition is skewed to basic residues; the sequence is RKQHLQKRRR. A C2H2-type 2 zinc finger spans residues 361–385; sequence LRCVTCDLQFDEEELLVEHMAQESH.

The protein belongs to the ZNF277 family. In terms of assembly, interacts with components of the origin recognition complex (ORC) complex, Orc2 and Orc3, components of the SAGA transcription coactivator-HAT complex, Gcn5 and e(y)2, components of the mRNP biogenesis THO complex, thoc5 and e(y)2, and a component of the TFIID complex, TBP. Also interacts with polybromo, a component of the chromatin remodeling SWI/SNF complex.

It is found in the nucleus. Its subcellular location is the cytoplasm. Functionally, DNA binding protein which is involved in the positive regulation of both basal and inducible transcription. Mainly localizes to active promoter sites and interacts with components of various transcription and replication regulatory complexes, such as the ORC, SAGA, THO, TFIID and SWI/SNF complexes. It may therefore regulate transcription by promoting the association of these complexes to their binding sites. In Drosophila melanogaster (Fruit fly), this protein is Zinc finger protein 277.